The primary structure comprises 434 residues: Zinc finger protein Pegasus (434 aa).

The disordered stretch occupies residues 33–57 (VSSDKEAETLQGAGTDSDQNGLDHP). 3 consecutive C2H2-type zinc fingers follow at residues 82–104 (LKCR…IRIH), 110–132 (HRCH…MRSH), and 138–161 (YKCE…RRKH). Residues 260–274 (GQLSSLPPDTQNPAS) are compositionally biased toward polar residues. The interval 260–357 (GQLSSLPPDT…PSTPAPALPA (98 aa)) is disordered. A compositionally biased stretch (low complexity) spans 296–313 (CASAVSTSVAQSSSPASP). A compositionally biased stretch (polar residues) spans 337 to 349 (RTSTPSISNSQPS). C2H2-type zinc fingers lie at residues 364 to 386 (HHCQ…MGCH) and 392 to 419 (FQCN…CCQH).

It belongs to the Ikaros C2H2-type zinc-finger protein family. In terms of assembly, probably self-associates.

The protein resides in the nucleus. Transcriptional repressor that binds the core 5'GNNTGTNG-3' DNA consensus sequence. The protein is Zinc finger protein Pegasus (ikzf5) of Xenopus tropicalis (Western clawed frog).